The chain runs to 389 residues: Phospho-N-acetylmuramoyl-pentapeptide-transferase (389 aa).

10 helical membrane passes run 25-45 (RAVM…PWVI), 73-93 (TMGG…WGDL), 97-117 (FIWI…VDDY), 135-155 (FWQS…VSEA), 190-210 (ISYP…IVGA), 222-242 (GLVI…AYVM), 258-278 (GAGE…AFLW), 286-306 (VFMG…VAVI), 311-331 (IVLF…MLQV), and 366-386 (QVVV…LSTL).

Belongs to the glycosyltransferase 4 family. MraY subfamily. Mg(2+) serves as cofactor.

The protein localises to the cell inner membrane. It catalyses the reaction UDP-N-acetyl-alpha-D-muramoyl-L-alanyl-gamma-D-glutamyl-meso-2,6-diaminopimeloyl-D-alanyl-D-alanine + di-trans,octa-cis-undecaprenyl phosphate = di-trans,octa-cis-undecaprenyl diphospho-N-acetyl-alpha-D-muramoyl-L-alanyl-D-glutamyl-meso-2,6-diaminopimeloyl-D-alanyl-D-alanine + UMP. It participates in cell wall biogenesis; peptidoglycan biosynthesis. Functionally, catalyzes the initial step of the lipid cycle reactions in the biosynthesis of the cell wall peptidoglycan: transfers peptidoglycan precursor phospho-MurNAc-pentapeptide from UDP-MurNAc-pentapeptide onto the lipid carrier undecaprenyl phosphate, yielding undecaprenyl-pyrophosphoryl-MurNAc-pentapeptide, known as lipid I. In Burkholderia multivorans (strain ATCC 17616 / 249), this protein is Phospho-N-acetylmuramoyl-pentapeptide-transferase.